The chain runs to 92 residues: Kinetoplastid membrane protein 11B (92 aa).

It belongs to the KMP-11 family. Monomer.

The protein localises to the cytoplasm. It localises to the cytoskeleton. It is found in the cell projection. The protein resides in the cilium. Its subcellular location is the flagellum. May be involved in the regulation of the cytoskeleton through interaction with the subpellicular microtubules. May be involved in parasite mobility and attachment to the surface of the host cell. Behaves as a strong immunogen during infection. This Leishmania infantum protein is Kinetoplastid membrane protein 11B (KMP-11B).